We begin with the raw amino-acid sequence, 423 residues long: Transcription factor IIIB 50 kDa subunit (423 aa).

The TFIIB-type zinc finger occupies 1–34 (MSKNCPECGSSRVVEDDLYSQKQWVCEDCGSVVS). Zn(2+) is bound by residues Cys5, Cys8, Cys26, and Cys29. Repeat 2 spans residues 171–245 (LESFCYDFKL…LARMKYSLMK (75 aa)). The segment covering 325 to 340 (QTSQYSESELSDSKSS) has biased composition (low complexity). The tract at residues 325–358 (QTSQYSESELSDSKSSVQTQCKSPPDEEDEGCEL) is disordered. The residue at position 373 (Cys373) is a Cysteine sulfenic acid (-SOH).

Belongs to the TFIIB family. As to quaternary structure, component of TFIIIB complexes. Interacts with TBP and forms a ternary complex with TBp and target DNA sequences. Post-translationally, in response to oxidative stress, a Cys-residue is reversibly oxidized to cysteine sulfenic acid. This impairs formation of a ternary complex with TBP and DNA and down-regulates expression of target genes in response to oxidative stress.

The protein resides in the nucleus. General activator of RNA polymerase III transcription. Factor exclusively required for RNA polymerase III transcription of genes with promoter elements upstream of the initiation sites. Contributes to the regulation of gene expression; functions as activator in the absence of oxidative stress. Down-regulates expression of target genes in response to oxidative stress. Overexpression protects cells against apoptosis in response to oxidative stress. The sequence is that of Transcription factor IIIB 50 kDa subunit (brf2) from Danio rerio (Zebrafish).